Consider the following 319-residue polypeptide: Acetyl esterase (319 aa).

The Involved in the stabilization of the negatively charged intermediate by the formation of the oxyanion hole signature appears at 91–93 (HGG). Active-site residues include S165, D262, and H292.

The protein belongs to the 'GDXG' lipolytic enzyme family. As to quaternary structure, homodimer. Interacts with MalT and MelA.

It localises to the cytoplasm. In terms of biological role, displays esterase activity towards short chain fatty esters (acyl chain length of up to 8 carbons). Able to hydrolyze triacetylglycerol (triacetin) and tributyrylglycerol (tributyrin), but not trioleylglycerol (triolein) or cholesterol oleate. Negatively regulates MalT activity by antagonizing maltotriose binding. Inhibits MelA galactosidase activity. This Escherichia coli O7:K1 (strain IAI39 / ExPEC) protein is Acetyl esterase.